The following is a 162-amino-acid chain: Austinoid biosynthesis clusters protein J (162 aa).

This sequence belongs to the trt14 isomerase family. Homodimer.

Its pathway is secondary metabolite biosynthesis; terpenoid biosynthesis. Part of the gene cluster B that mediates the biosynthesis of austinol and dehydroaustinol, two fungal meroterpenoids. The first step of the pathway is the synthesis of 3,5-dimethylorsellinic acid by the polyketide synthase ausA. 3,5-dimethylorsellinic acid is then prenylated by the polyprenyl transferase ausN. Further epoxidation by the FAD-dependent monooxygenase ausM and cyclization by the probable terpene cyclase ausL lead to the formation of protoaustinoid A. Protoaustinoid A is then oxidized to spiro-lactone preaustinoid A3 by the combined action of the FAD-binding monooxygenases ausB and ausC, and the dioxygenase ausE. Acid-catalyzed keto-rearrangement and ring contraction of the tetraketide portion of preaustinoid A3 by ausJ lead to the formation of preaustinoid A4. The aldo-keto reductase ausK, with the help of ausH, is involved in the next step by transforming preaustinoid A4 into isoaustinone which is in turn hydroxylated by the P450 monooxygenase ausI to form austinolide. Finally, the cytochrome P450 monooxygenase ausG modifies austinolide to austinol. Austinol can be further modified to dehydroaustinol which forms a diffusible complex with diorcinol that initiates conidiation. Due to genetic rearrangements of the clusters and the subsequent loss of some enzymes, the end products of the Emericella nidulans austinoid biosynthesis clusters are austinol and dehydroaustinol, even if additional enzymes, such as the O-acetyltransferase ausQ and the cytochrome P450 monooxygenase ausR are still functional. This is Austinoid biosynthesis clusters protein J from Emericella nidulans (strain FGSC A4 / ATCC 38163 / CBS 112.46 / NRRL 194 / M139) (Aspergillus nidulans).